Consider the following 105-residue polypeptide: Circadian clock oscillator protein KaiB (105 aa).

Belongs to the KaiB family. As to quaternary structure, may undergo a major conformational rearrangment; in the free state forms homooligomers. When bound to KaiC switches to a monomeric thioredoxin-fold (KaiB(fs)). The active oscillator complex is probably KaiC(6):KaiB(6).

Functionally, component of the KaiBC clock protein complex, which constitutes the main circadian regulator in cyanobacteria; it may modify the ATPase activity of KaiC. May be a metamorphic protein which reversibly switches between an inactive tetrameric fold and a rare, thioredoxin-like monomeric fold (KaiB(fs)). KaiB(fs) binds phospho-KaiC, and perhaps clock output effectors. The polypeptide is Circadian clock oscillator protein KaiB (Prochlorococcus marinus (strain MIT 9312)).